The sequence spans 185 residues: Ribosome-recycling factor (185 aa).

It belongs to the RRF family.

It localises to the cytoplasm. Responsible for the release of ribosomes from messenger RNA at the termination of protein biosynthesis. May increase the efficiency of translation by recycling ribosomes from one round of translation to another. This Streptococcus pneumoniae (strain 70585) protein is Ribosome-recycling factor.